The following is a 402-amino-acid chain: Probable glutamate 5-kinase (402 aa).

Positions 58, 145, and 157 each coordinate substrate. ATP contacts are provided by residues 177–178 (TD) and 218–224 (TGGMKTK). A PUA domain is found at 295–373 (HGSLEIDRGA…KEIASILGYN (79 aa)).

Belongs to the glutamate 5-kinase family.

It is found in the cytoplasm. It catalyses the reaction L-glutamate + ATP = L-glutamyl 5-phosphate + ADP. The protein operates within amino-acid biosynthesis; L-proline biosynthesis; L-glutamate 5-semialdehyde from L-glutamate: step 1/2. Catalyzes the transfer of a phosphate group to glutamate to form glutamate 5-phosphate which rapidly cyclizes to 5-oxoproline. The chain is Probable glutamate 5-kinase from Schizosaccharomyces pombe (strain 972 / ATCC 24843) (Fission yeast).